A 428-amino-acid chain; its full sequence is Cytochrome c biogenesis protein CcsB (428 aa).

3 helical membrane-spanning segments follow: residues 14 to 34 (LRFA…GTFI), 72 to 92 (SNWF…CSFR), and 162 to 182 (LGPI…AYGN).

The protein belongs to the Ccs1/CcsB family. As to quaternary structure, may interact with CcsA.

Its subcellular location is the cellular thylakoid membrane. Its function is as follows. Required during biogenesis of c-type cytochromes (cytochrome c6 and cytochrome f) at the step of heme attachment. The chain is Cytochrome c biogenesis protein CcsB from Prochlorococcus marinus subsp. pastoris (strain CCMP1986 / NIES-2087 / MED4).